The following is a 404-amino-acid chain: Zinc transporter 10 (404 aa).

An N-terminal signal peptide occupies residues 1 to 22 (MESSSSSSYIPFIRQIAASVSA). The Extracellular portion of the chain corresponds to 23-49 (ASCDAVVGGGGDKDEECRDEAAALRLK). Residues 50–70 (MVAVAAILIAGAAGVAIPLVG) traverse the membrane as a helical segment. Topologically, residues 71–86 (RRRRGGGGGGGGGASS) are cytoplasmic. A helical membrane pass occupies residues 87-107 (GGLFVLAKAFAAGVILATGFV). At 108–129 (HMLHDAEHALSNPCLPHSPWRR) the chain is on the extracellular side. The helical transmembrane segment at 130–150 (FPFPGFVAMLAALATLVVDFV) threads the bilayer. Residues 151–248 (GTHFYERKHR…GHEEGPSARH (98 aa)) lie on the Cytoplasmic side of the membrane. A helical transmembrane segment spans residues 249–269 (VVVSQILELGIVSHSVIIGLS). Residues 270–280 (LGVSQSPCTIK) lie on the Extracellular side of the membrane. Residues 281 to 301 (PLVAALSFHQFFEGFALGGCI) traverse the membrane as a helical segment. Residues 302 to 311 (SEAQLKNFSA) are Cytoplasmic-facing. Residues 312-332 (FLMAFFFAITTPAGITVGAAV) form a helical membrane-spanning segment. Residues 333-343 (ASFYNPNSPRA) are Extracellular-facing. Residues 344–364 (LVVEGILDSMSAGILIYMALV) form a helical membrane-spanning segment. The Cytoplasmic segment spans residues 365 to 383 (DLIAADFLSRKMSCNPRLQ). Residues 384–404 (VGSYIALFLGAMAMAALALWA) form a helical membrane-spanning segment.

This sequence belongs to the ZIP transporter (TC 2.A.5) family.

It localises to the cell membrane. Its function is as follows. Zinc transporter that may be involved in zinc uptake from the rhizosphere. This is Zinc transporter 10 (ZIP10) from Oryza sativa subsp. japonica (Rice).